Reading from the N-terminus, the 463-residue chain is HEPACAM family member 2 (463 aa).

Positions Met-1–Gly-32 are cleaved as a signal peptide. 3 N-linked (GlcNAc...) asparagine glycosylation sites follow: Asn-86, Asn-130, and Asn-166. Ig-like C2-type domains follow at residues Pro-150 to Ile-234 and Pro-236 to Thr-332. Intrachain disulfides connect Cys-171-Cys-220 and Cys-271-Cys-316. N-linked (GlcNAc...) asparagine glycosylation occurs at Asn-321. A helical membrane pass occupies residues Leu-353–Trp-373. Topologically, residues Lys-374 to Glu-463 are cytoplasmic.

Poly-ADP-ribosylated (PARsylated) by tankyrase TNKS during late G2 and prophase, leading to translocation to mitotic centrosomes. In terms of processing, N-glycosylated.

The protein resides in the golgi apparatus membrane. It localises to the cytoplasm. Its subcellular location is the cytoskeleton. It is found in the spindle. The protein localises to the microtubule organizing center. The protein resides in the centrosome. It localises to the midbody. Required during prometaphase for centrosome maturation. Following poly-ADP-ribosylation (PARsylation) by TNKS, translocates from the Golgi apparatus to mitotic centrosomes and plays a key role in the formation of robust microtubules for prompt movement of chromosomes: anchors AKAP9/CG-NAP, a scaffold protein of the gamma-tubulin ring complex and promotes centrosome maturation. This is HEPACAM family member 2 (Hepacam2) from Mus musculus (Mouse).